Consider the following 137-residue polypeptide: Protein MGF 110-7L (137 aa).

The signal sequence occupies residues 1 to 20; the sequence is MLVIILGVIGLLASSNLVSS. N-linked (GlcNAc...) asparagine; by host glycosylation is found at N69, N70, and N105.

It belongs to the asfaviruses V110 family.

The protein is Protein MGF 110-7L of Ornithodoros (relapsing fever ticks).